A 690-amino-acid polypeptide reads, in one-letter code: DNA ligase (690 aa).

NAD(+)-binding positions include 36–40, 85–86, and Glu-124; these read DSVYD and SL. The active-site N6-AMP-lysine intermediate is Lys-126. Positions 147, 184, 308, and 332 each coordinate NAD(+). Cys-426, Cys-429, Cys-444, and Cys-449 together coordinate Zn(2+). The BRCT domain occupies 614 to 690; that stretch reads NQSNVFDGKS…INENELKLLL (77 aa).

Belongs to the NAD-dependent DNA ligase family. LigA subfamily. Mg(2+) serves as cofactor. Requires Mn(2+) as cofactor.

It carries out the reaction NAD(+) + (deoxyribonucleotide)n-3'-hydroxyl + 5'-phospho-(deoxyribonucleotide)m = (deoxyribonucleotide)n+m + AMP + beta-nicotinamide D-nucleotide.. In terms of biological role, DNA ligase that catalyzes the formation of phosphodiester linkages between 5'-phosphoryl and 3'-hydroxyl groups in double-stranded DNA using NAD as a coenzyme and as the energy source for the reaction. It is essential for DNA replication and repair of damaged DNA. This Prochlorococcus marinus (strain NATL2A) protein is DNA ligase.